A 406-amino-acid polypeptide reads, in one-letter code: Cysteine desulfurase (406 aa).

An N6-(pyridoxal phosphate)lysine modification is found at lysine 226. Catalysis depends on cysteine 364, which acts as the Cysteine persulfide intermediate.

This sequence belongs to the class-V pyridoxal-phosphate-dependent aminotransferase family. Csd subfamily. As to quaternary structure, homodimer. Interacts with SufE and the SufBCD complex composed of SufB, SufC and SufD. The interaction with SufE is required to mediate the direct transfer of the sulfur atom from the S-sulfanylcysteine. Requires pyridoxal 5'-phosphate as cofactor.

The protein localises to the cytoplasm. It carries out the reaction (sulfur carrier)-H + L-cysteine = (sulfur carrier)-SH + L-alanine. It catalyses the reaction L-selenocysteine + AH2 = hydrogenselenide + L-alanine + A + H(+). Its pathway is cofactor biosynthesis; iron-sulfur cluster biosynthesis. Functionally, cysteine desulfurases mobilize the sulfur from L-cysteine to yield L-alanine, an essential step in sulfur metabolism for biosynthesis of a variety of sulfur-containing biomolecules. Component of the suf operon, which is activated and required under specific conditions such as oxidative stress and iron limitation. Acts as a potent selenocysteine lyase in vitro, that mobilizes selenium from L-selenocysteine. Selenocysteine lyase activity is however unsure in vivo. The protein is Cysteine desulfurase of Salmonella heidelberg (strain SL476).